Reading from the N-terminus, the 414-residue chain is Acetate kinase (414 aa).

Asparagine 7 is a Mg(2+) binding site. An ATP-binding site is contributed by lysine 14. Arginine 99 contacts substrate. Residue aspartate 157 is the Proton donor/acceptor of the active site. Residues 217–221 (HLGNG) and 341–345 (GIGEN) contribute to the ATP site. Position 395 (glutamate 395) interacts with Mg(2+).

The protein belongs to the acetokinase family. As to quaternary structure, homodimer. Requires Mg(2+) as cofactor. It depends on Mn(2+) as a cofactor.

The protein resides in the cytoplasm. It catalyses the reaction acetate + ATP = acetyl phosphate + ADP. It functions in the pathway metabolic intermediate biosynthesis; acetyl-CoA biosynthesis; acetyl-CoA from acetate: step 1/2. Its function is as follows. Catalyzes the formation of acetyl phosphate from acetate and ATP. Can also catalyze the reverse reaction. The polypeptide is Acetate kinase (Solibacter usitatus (strain Ellin6076)).